The primary structure comprises 525 residues: Peptide chain release factor 3 (525 aa).

One can recognise a tr-type G domain in the interval 9–276 (AKRRTFAIIS…GFTTYAPEPQ (268 aa)). GTP is bound by residues 18–25 (SHPDAGKT), 86–90 (DTPGH), and 140–143 (NKFD).

Belongs to the TRAFAC class translation factor GTPase superfamily. Classic translation factor GTPase family. PrfC subfamily.

It is found in the cytoplasm. Increases the formation of ribosomal termination complexes and stimulates activities of RF-1 and RF-2. It binds guanine nucleotides and has strong preference for UGA stop codons. It may interact directly with the ribosome. The stimulation of RF-1 and RF-2 is significantly reduced by GTP and GDP, but not by GMP. This is Peptide chain release factor 3 from Francisella philomiragia subsp. philomiragia (strain ATCC 25017 / CCUG 19701 / FSC 153 / O#319-036).